We begin with the raw amino-acid sequence, 648 residues long: DNA ligase (648 aa).

Residues 30-34 (DEEYD), 79-80 (SM), and glutamate 108 contribute to the NAD(+) site. Lysine 110 functions as the N6-AMP-lysine intermediate in the catalytic mechanism. NAD(+) is bound by residues arginine 131, glutamate 165, lysine 280, and lysine 304. Residues cysteine 398, cysteine 401, cysteine 414, and cysteine 419 each coordinate Zn(2+). A BRCT domain is found at 573–648 (AKENPFKGKI…LTEDEMRAML (76 aa)).

This sequence belongs to the NAD-dependent DNA ligase family. LigA subfamily. It depends on Mg(2+) as a cofactor. Mn(2+) serves as cofactor.

The enzyme catalyses NAD(+) + (deoxyribonucleotide)n-3'-hydroxyl + 5'-phospho-(deoxyribonucleotide)m = (deoxyribonucleotide)n+m + AMP + beta-nicotinamide D-nucleotide.. Its function is as follows. DNA ligase that catalyzes the formation of phosphodiester linkages between 5'-phosphoryl and 3'-hydroxyl groups in double-stranded DNA using NAD as a coenzyme and as the energy source for the reaction. It is essential for DNA replication and repair of damaged DNA. The polypeptide is DNA ligase (Sulfurovum sp. (strain NBC37-1)).